The following is a 360-amino-acid chain: DNA replication and repair protein RecF (360 aa).

ATP is bound at residue 33 to 40 (GENGSGKT).

The protein belongs to the RecF family.

It is found in the cytoplasm. Functionally, the RecF protein is involved in DNA metabolism; it is required for DNA replication and normal SOS inducibility. RecF binds preferentially to single-stranded, linear DNA. It also seems to bind ATP. The chain is DNA replication and repair protein RecF from Rickettsia akari (strain Hartford).